A 266-amino-acid polypeptide reads, in one-letter code: Vitamin B12-binding protein (266 aa).

The N-terminal stretch at 1–22 (MVKQMFRALVALLLTLPVWLYA) is a signal peptide. Residues 25 to 266 (RVITLSPANT…QLCNALSQVN (242 aa)) form the Fe/B12 periplasmic-binding domain. Cyanocob(III)alamin-binding positions include tyrosine 50 and 242 to 246 (DWFER). Cysteine 183 and cysteine 259 are disulfide-bonded.

Belongs to the BtuF family. The complex is composed of two ATP-binding proteins (BtuD), two transmembrane proteins (BtuC) and a solute-binding protein (BtuF).

It is found in the periplasm. Part of the ABC transporter complex BtuCDF involved in vitamin B12 import. Binds vitamin B12 and delivers it to the periplasmic surface of BtuC. The chain is Vitamin B12-binding protein from Salmonella choleraesuis (strain SC-B67).